The sequence spans 111 residues: Ribonuclease P protein component 1 (111 aa).

This sequence belongs to the eukaryotic/archaeal RNase P protein component 1 family. Consists of a catalytic RNA component and at least 4-5 protein subunits.

The protein resides in the cytoplasm. The catalysed reaction is Endonucleolytic cleavage of RNA, removing 5'-extranucleotides from tRNA precursor.. Part of ribonuclease P, a protein complex that generates mature tRNA molecules by cleaving their 5'-ends. The protein is Ribonuclease P protein component 1 of Hyperthermus butylicus (strain DSM 5456 / JCM 9403 / PLM1-5).